The chain runs to 109 residues: Phycoerythrin alpha-2 subunit (109 aa).

The (2R,3E)-phycoerythrobilin site is built by D52, S53, E63, R64, C67, T72, K74, A75, and K84.

It belongs to the phycoerythrin family. Heterotetramer of 2 different alpha chains and 2 identical beta chains which form 2 alpha-beta heterodimers within the heterotetramer. The two alpha-beta heterodimers are rotated to an open configuration in contrast to the closed configuration found in other cryptophyte species due to the insertion of a single amino acid, Asp-65, in a conserved region of the alpha chain. In the open form, the central chromophores are not in physical contact but are separated by a water-filled channel. Contains three phycoerythrobilin chromophores with binding mediated by both the alpha and beta subunits.

It localises to the plastid. The protein resides in the chloroplast thylakoid membrane. In terms of biological role, light-harvesting photosynthetic tetrapyrrole chromophore-protein from the phycobiliprotein complex. The protein is Phycoerythrin alpha-2 subunit of Hemiselmis andersenii (Cryptophyte alga).